The primary structure comprises 284 residues: 4-diphosphocytidyl-2-C-methyl-D-erythritol kinase (284 aa).

K14 is an active-site residue. 98-108 (PMGGGLGGGSS) is an ATP binding site. D140 is an active-site residue.

Belongs to the GHMP kinase family. IspE subfamily.

It carries out the reaction 4-CDP-2-C-methyl-D-erythritol + ATP = 4-CDP-2-C-methyl-D-erythritol 2-phosphate + ADP + H(+). Its pathway is isoprenoid biosynthesis; isopentenyl diphosphate biosynthesis via DXP pathway; isopentenyl diphosphate from 1-deoxy-D-xylulose 5-phosphate: step 3/6. Its function is as follows. Catalyzes the phosphorylation of the position 2 hydroxy group of 4-diphosphocytidyl-2C-methyl-D-erythritol. This chain is 4-diphosphocytidyl-2-C-methyl-D-erythritol kinase, found in Shewanella oneidensis (strain ATCC 700550 / JCM 31522 / CIP 106686 / LMG 19005 / NCIMB 14063 / MR-1).